We begin with the raw amino-acid sequence, 220 residues long: Tegument protein UL51 homolog (220 aa).

C11 carries the S-palmitoyl cysteine; by host lipid modification.

The protein belongs to the herpesviridae UL51 family. Oligomerizes. Interacts with UL7 homolog; this interaction mediates UL7 homolog incorporation to virions. In terms of processing, phosphorylated. Palmitoylation is necessary for Golgi localization.

The protein resides in the virion tegument. It localises to the host cytoplasm. It is found in the host Golgi apparatus. Its function is as follows. Plays several roles during the time course of infection, including egress of virus particles from the perinuclear space and secondary envelopment of cytoplasmic capsids that bud into specific trans-Golgi network (TGN)-derived membranes. The sequence is that of Tegument protein UL51 homolog (55) from Connochaetes taurinus (Blue wildebeest).